The primary structure comprises 242 residues: Biosynthetic peptidoglycan transglycosylase (242 aa).

The helical transmembrane segment at 19–39 (LMVVLAVFWGGGIALFSVAPV) threads the bilayer.

It belongs to the glycosyltransferase 51 family.

It is found in the cell inner membrane. The catalysed reaction is [GlcNAc-(1-&gt;4)-Mur2Ac(oyl-L-Ala-gamma-D-Glu-L-Lys-D-Ala-D-Ala)](n)-di-trans,octa-cis-undecaprenyl diphosphate + beta-D-GlcNAc-(1-&gt;4)-Mur2Ac(oyl-L-Ala-gamma-D-Glu-L-Lys-D-Ala-D-Ala)-di-trans,octa-cis-undecaprenyl diphosphate = [GlcNAc-(1-&gt;4)-Mur2Ac(oyl-L-Ala-gamma-D-Glu-L-Lys-D-Ala-D-Ala)](n+1)-di-trans,octa-cis-undecaprenyl diphosphate + di-trans,octa-cis-undecaprenyl diphosphate + H(+). Its pathway is cell wall biogenesis; peptidoglycan biosynthesis. In terms of biological role, peptidoglycan polymerase that catalyzes glycan chain elongation from lipid-linked precursors. The chain is Biosynthetic peptidoglycan transglycosylase from Escherichia coli O17:K52:H18 (strain UMN026 / ExPEC).